A 189-amino-acid chain; its full sequence is Large ribosomal subunit protein bL9 (189 aa).

The protein belongs to the bacterial ribosomal protein bL9 family.

In terms of biological role, binds to the 23S rRNA. In Brucella ovis (strain ATCC 25840 / 63/290 / NCTC 10512), this protein is Large ribosomal subunit protein bL9.